Reading from the N-terminus, the 517-residue chain is GMP synthase [glutamine-hydrolyzing] (517 aa).

One can recognise a Glutamine amidotransferase type-1 domain in the interval 11-202 (KIIVLDFGSQ…AFKVCGAKAN (192 aa)). Catalysis depends on cysteine 88, which acts as the Nucleophile. Active-site residues include histidine 176 and glutamate 178. A GMPS ATP-PPase domain is found at 203-392 (WTMDDFIEMQ…LGIPHDLVWR (190 aa)). ATP is bound at residue 230–236 (SGGVDSS).

Homodimer.

The catalysed reaction is XMP + L-glutamine + ATP + H2O = GMP + L-glutamate + AMP + diphosphate + 2 H(+). It functions in the pathway purine metabolism; GMP biosynthesis; GMP from XMP (L-Gln route): step 1/1. Functionally, catalyzes the synthesis of GMP from XMP. The chain is GMP synthase [glutamine-hydrolyzing] from Lactobacillus johnsonii (strain CNCM I-12250 / La1 / NCC 533).